A 1025-amino-acid polypeptide reads, in one-letter code: MKFFALFIYRPVATILLSVAITLCGILGFRMLPVAPLPQVDFPVIMVSASLPGASPETMASSVATPLERSLGRIAGVSEMTSSSSLGSTRIILQFDFDRDINGAARDVQAAINAAQSLLPSGMPSRPTYRKANPSDAPIMILTLTSDTYSQGELYDFASTQLAPTISQIDGVGDVDVGGSSLPAVRVGLNPQALFNQGVSLDDVRTAISNANVRKPQGALEDGTHRWQIQTNDELKTAAEYQPLIIHYNNGGAVRLGDVATVTDSVQDVRNAGMTNAKPAILLMIRKLPEANIIQTVDSIRARLPELQSTIPAAIDLQIAQDRSPTIRASLEEVEQTLIISVALVILVVFLFLRSGRATIIPAVAVPVSLIGTFAAMYLCGFSLNNLSLMALTIATGFVVDDAIVVLENIARHLEAGMKPLQAALQGTREVGFTVLSMSLSLVAVFLPLLLMGGLPGRLLREFAVTLSVAIGISLLVSLTLTPMMCGWMLKASKPREQKRLRGFGRMLVALQQGYGKSLKWVLNHTRLVGVVLLGTIALNIWLYISIPKTFFPEQDTGVLMGGIQADQSISFQAMRGKLQDFMKIIRDDPAVDNVTGFTGGSRVNSGMMFITLKPRGERSETAQQIIDRLRKKLAKEPGANLFLMAVQDIRVGGRQANASYQYTLLSDDLAALREWEPKIRKKLATLPELADVNSDQEDNGAEMNLIYDRDTMARLGIDVQAANSLLNNAFGQRQISTIYQPMNQYKVVMEVDPRYTQDISALEKMFVINNEGKAIPLSYFAKWQPANAPLSVNHQGLSAASTISFNLPTGKSLSDASAAIDRAMTQLGVPSTVRGSFAGTAQVFQETMNSQVILIIAAIATVYIVLGILYESYVHPLTILSTLPSAGVGALLALQLFNAPFSLIALIGIMLLIGIVKKNAIMMVYFALEAQRHGNLTPQEAIFQACLLRFRPIMMTTLAALFGALPLVLSGGDGSELRQPLGITIVGGLVMSQLLTLYTTPVVYLFFDRLRLRFSRKPKQAVTE.

The next 12 membrane-spanning stretches (helical) occupy residues 3 to 23 (FFALFIYRPVATILLSVAITL), 333 to 353 (EVEQTLIISVALVILVVFLFL), 360 to 380 (IIPAVAVPVSLIGTFAAMYLC), 387 to 407 (LSLMALTIATGFVVDDAIVVL), 431 to 451 (VGFTVLSMSLSLVAVFLPLLL), 463 to 483 (FAVTLSVAIGISLLVSLTLTP), 528 to 548 (LVGVVLLGTIALNIWLYISIP), 853 to 873 (VILIIAAIATVYIVLGILYES), 875 to 895 (VHPLTILSTLPSAGVGALLAL), 897 to 917 (LFNAPFSLIALIGIMLLIGIV), 953 to 973 (PIMMTTLAALFGALPLVLSGG), and 984 to 1004 (ITIVGGLVMSQLLTLYTTPVV).

It belongs to the resistance-nodulation-cell division (RND) (TC 2.A.6) family. MdtC subfamily. In terms of assembly, part of a tripartite efflux system composed of MdtA, MdtB and MdtC. MdtC forms a heteromultimer with MdtB.

It localises to the cell inner membrane. Its function is as follows. The MdtABC tripartite complex confers resistance against novobiocin and deoxycholate. The sequence is that of Multidrug resistance protein MdtC from Escherichia coli O1:K1 / APEC.